We begin with the raw amino-acid sequence, 295 residues long: NAD kinase (295 aa).

D74 functions as the Proton acceptor in the catalytic mechanism. Residues 74 to 75 (DG), 148 to 149 (ND), H159, R176, D178, and 189 to 194 (TAYALS) contribute to the NAD(+) site.

It belongs to the NAD kinase family. The cofactor is a divalent metal cation.

Its subcellular location is the cytoplasm. It carries out the reaction NAD(+) + ATP = ADP + NADP(+) + H(+). Its function is as follows. Involved in the regulation of the intracellular balance of NAD and NADP, and is a key enzyme in the biosynthesis of NADP. Catalyzes specifically the phosphorylation on 2'-hydroxyl of the adenosine moiety of NAD to yield NADP. This is NAD kinase from Legionella pneumophila (strain Corby).